The primary structure comprises 240 residues: 1-(5-phosphoribosyl)-5-[(5-phosphoribosylamino)methylideneamino] imidazole-4-carboxamide isomerase (240 aa).

Residue Asp8 is the Proton acceptor of the active site. The active-site Proton donor is the Asp130.

This sequence belongs to the HisA/HisF family.

It localises to the cytoplasm. The catalysed reaction is 1-(5-phospho-beta-D-ribosyl)-5-[(5-phospho-beta-D-ribosylamino)methylideneamino]imidazole-4-carboxamide = 5-[(5-phospho-1-deoxy-D-ribulos-1-ylimino)methylamino]-1-(5-phospho-beta-D-ribosyl)imidazole-4-carboxamide. It functions in the pathway amino-acid biosynthesis; L-histidine biosynthesis; L-histidine from 5-phospho-alpha-D-ribose 1-diphosphate: step 4/9. The polypeptide is 1-(5-phosphoribosyl)-5-[(5-phosphoribosylamino)methylideneamino] imidazole-4-carboxamide isomerase (Elusimicrobium minutum (strain Pei191)).